The primary structure comprises 421 residues: Synaptotagmin-12 (421 aa).

Over 1-18 (MAVDVTEYHLSVIKSPPG) the chain is Vesicular. Residues 19–39 (WEVGVYAAGALALLGIAAVSL) form a helical membrane-spanning segment. The Cytoplasmic segment spans residues 40-421 (WKLWTSGSFP…VSMWHPVRRN (382 aa)). Ser97 carries the post-translational modification Phosphoserine; by PKA. A phosphoserine mark is found at Ser99 and Ser214. C2 domains are found at residues 152-272 (TLGQ…SGWL) and 283-416 (AVGE…SMWH).

This sequence belongs to the synaptotagmin family. In terms of assembly, homodimer. Can also form heterodimers. Interacts with SYT1. Phosphorylation of Ser-97 is required for mossy-fiber long-term potentiation. Expressed in the brain, specifically by neurons in the hippocampus, and in the adrenal medulla (at protein level).

The protein localises to the cytoplasmic vesicle. It is found in the secretory vesicle. Its subcellular location is the synaptic vesicle membrane. Synaptic vesicle phosphoprotein that enhances spontaneous neurotransmitter release but does not effect induced neurotransmitter release. Unlike other synaptotagmins, it does not bind Ca(2+) or phospholipids. Essential for mossy-fiber long-term potentiation in the hippocampus. This Mus musculus (Mouse) protein is Synaptotagmin-12.